A 262-amino-acid chain; its full sequence is Orotidine 5'-phosphate decarboxylase (262 aa).

Substrate contacts are provided by residues aspartate 35, lysine 57–histidine 59, aspartate 89–threonine 98, tyrosine 215, and arginine 233. Lysine 91 (proton donor) is an active-site residue.

Belongs to the OMP decarboxylase family.

It carries out the reaction orotidine 5'-phosphate + H(+) = UMP + CO2. Its pathway is pyrimidine metabolism; UMP biosynthesis via de novo pathway; UMP from orotate: step 2/2. In Pichia kudriavzevii (Yeast), this protein is Orotidine 5'-phosphate decarboxylase (URA3).